The primary structure comprises 314 residues: tRNA pseudouridine synthase B (314 aa).

A substrate-binding site is contributed by His-43. Catalysis depends on Asp-48, which acts as the Nucleophile. Residues Tyr-76, Tyr-179, and Leu-200 each coordinate substrate.

Belongs to the pseudouridine synthase TruB family. Type 1 subfamily.

The enzyme catalyses uridine(55) in tRNA = pseudouridine(55) in tRNA. Responsible for synthesis of pseudouridine from uracil-55 in the psi GC loop of transfer RNAs. This is tRNA pseudouridine synthase B from Shigella boydii serotype 4 (strain Sb227).